The following is a 164-amino-acid chain: C-phycoerythrin alpha chain (164 aa).

Positions 82 and 139 each coordinate (2R,3E)-phycoerythrobilin.

It belongs to the phycobiliprotein family. Heterodimer of an alpha and a beta chain. In terms of processing, contains two covalently linked bilin chromophores.

It localises to the cellular thylakoid membrane. In terms of biological role, light-harvesting photosynthetic bile pigment-protein from the phycobiliprotein complex. The chain is C-phycoerythrin alpha chain (cpeA) from Synechocystis sp. (strain PCC 6701).